Here is a 364-residue protein sequence, read N- to C-terminus: Aminomethyltransferase (364 aa).

This sequence belongs to the GcvT family. As to quaternary structure, the glycine cleavage system is composed of four proteins: P, T, L and H.

The enzyme catalyses N(6)-[(R)-S(8)-aminomethyldihydrolipoyl]-L-lysyl-[protein] + (6S)-5,6,7,8-tetrahydrofolate = N(6)-[(R)-dihydrolipoyl]-L-lysyl-[protein] + (6R)-5,10-methylene-5,6,7,8-tetrahydrofolate + NH4(+). Its function is as follows. The glycine cleavage system catalyzes the degradation of glycine. The sequence is that of Aminomethyltransferase from Escherichia coli O17:K52:H18 (strain UMN026 / ExPEC).